We begin with the raw amino-acid sequence, 576 residues long: Hemagglutinin-neuraminidase (576 aa).

Over residues 1–10 (MDGDRGKRDS) the composition is skewed to basic and acidic residues. A disordered region spans residues 1–24 (MDGDRGKRDSYWSTSPSGSTTKLA). Topologically, residues 1 to 37 (MDGDRGKRDSYWSTSPSGSTTKLASGWERSSKVDTWL) are intravirion. The tract at residues 10–14 (SYWST) is incorporation in virion. The span at 11 to 23 (YWSTSPSGSTTKL) shows a compositional bias: polar residues. Residues 38-58 (LILSFTQWALSIATVIICIII) traverse the membrane as a helical segment. Positions 59-140 (SARQGYSTKE…RQELTQLCES (82 aa)) are involved in interaction with F protein. Over 59 to 576 (SARQGYSTKE…SIPKLCKAES (518 aa)) the chain is Virion surface. N-linked (GlcNAc...) asparagine; by host glycosylation is present at Asn-77. 4 disulfides stabilise this stretch: Cys-192-Cys-216, Cys-258-Cys-271, Cys-357-Cys-469, and Cys-463-Cys-473. An involved in neuraminidase activity region spans residues 254 to 259 (NRKSCS). Asn-499 and Asn-511 each carry an N-linked (GlcNAc...) asparagine; by host glycan. An intrachain disulfide couples Cys-536 to Cys-545.

This sequence belongs to the paramyxoviruses hemagglutinin-neuraminidase family. Homotetramer; composed of disulfide-linked homodimers. Interacts with F protein trimer. Post-translationally, N-glycosylated; glycans consist of a mixture of high mannose-type oligosaccharides and of complex-type oligosaccharides.

The protein resides in the virion membrane. Its subcellular location is the host cell membrane. It catalyses the reaction Hydrolysis of alpha-(2-&gt;3)-, alpha-(2-&gt;6)-, alpha-(2-&gt;8)- glycosidic linkages of terminal sialic acid residues in oligosaccharides, glycoproteins, glycolipids, colominic acid and synthetic substrates.. Its function is as follows. Attaches the virus to sialic acid-containing cell receptors and thereby initiating infection. Binding of HN protein to the receptor induces a conformational change that allows the F protein to trigger virion/cell membranes fusion. Functionally, neuraminidase activity ensures the efficient spread of the virus by dissociating the mature virions from the neuraminic acid containing glycoproteins. In Sendai virus (strain Harris) (SeV), this protein is Hemagglutinin-neuraminidase (HN).